The chain runs to 262 residues: Small ribosomal subunit protein uS3 (262 aa).

The region spanning 38–106 is the KH type-2 domain; the sequence is LRKIIAKELE…KVKLNIQEIH (69 aa). Residues 211–262 are disordered; it reads KGQTQLPQPAVAAARPGLTVEEEERPQRKGGRGGRGANAGAARGGRGGRSRS. A compositionally biased stretch (gly residues) spans 243–255; that stretch reads GGRGANAGAARGG.

It belongs to the universal ribosomal protein uS3 family. As to quaternary structure, part of the 30S ribosomal subunit. Forms a tight complex with proteins S10 and S14.

In terms of biological role, binds the lower part of the 30S subunit head. Binds mRNA in the 70S ribosome, positioning it for translation. The chain is Small ribosomal subunit protein uS3 from Roseiflexus sp. (strain RS-1).